A 317-amino-acid chain; its full sequence is MPVNSTAVSWTSVTYITVEILIGLCAIVGNVLVIWVVKLNPSLQTTTFYFIVSLALADIAVGVLVMPLAIVISLGVTIHFYSCLFMTCLMLIFTHASIMSLLAIAVDRYLRVKLTVRYRRVTTQRRIWLALGLCWLVSFLVGLTPMFGWNMKLSSADENLTFLPCRFRSVMRMDYMVYFSFFLWILVPLVVMCAIYFDIFYIIRNRLSQSFSGSRETGAFYGREFKTAKSLLLVLFLFALCWLPLSIINCILYFDGQVPQTVLYLGILLSHANSMMNPIVYAYKIKKFKETYLLILKACVMCQPSKSMDPSTEQTSE.

At 1-14 the chain is on the extracellular side; the sequence is MPVNSTAVSWTSVT. An N-linked (GlcNAc...) asparagine glycan is attached at Asn-4. A helical membrane pass occupies residues 15 to 37; it reads YITVEILIGLCAIVGNVLVIWVV. The Cytoplasmic portion of the chain corresponds to 38-48; that stretch reads KLNPSLQTTTF. Residues 49 to 72 form a helical membrane-spanning segment; sequence YFIVSLALADIAVGVLVMPLAIVI. Residues 73 to 84 lie on the Extracellular side of the membrane; the sequence is SLGVTIHFYSCL. Cys-83 and Cys-165 are oxidised to a cystine. A helical membrane pass occupies residues 85 to 106; that stretch reads FMTCLMLIFTHASIMSLLAIAV. Over 107–126 the chain is Cytoplasmic; it reads DRYLRVKLTVRYRRVTTQRR. The helical transmembrane segment at 127–148 threads the bilayer; that stretch reads IWLALGLCWLVSFLVGLTPMFG. The Extracellular portion of the chain corresponds to 149-176; the sequence is WNMKLSSADENLTFLPCRFRSVMRMDYM. Asn-159 is a glycosylation site (N-linked (GlcNAc...) asparagine). The helical transmembrane segment at 177-197 threads the bilayer; that stretch reads VYFSFFLWILVPLVVMCAIYF. The Cytoplasmic segment spans residues 198–230; that stretch reads DIFYIIRNRLSQSFSGSRETGAFYGREFKTAKS. Residues 231–254 form a helical membrane-spanning segment; that stretch reads LLLVLFLFALCWLPLSIINCILYF. The Extracellular segment spans residues 255 to 260; it reads DGQVPQ. A helical transmembrane segment spans residues 261–283; that stretch reads TVLYLGILLSHANSMMNPIVYAY. The Cytoplasmic segment spans residues 284 to 317; sequence KIKKFKETYLLILKACVMCQPSKSMDPSTEQTSE. Residue Cys-302 is the site of S-palmitoyl cysteine attachment.

It belongs to the G-protein coupled receptor 1 family. In terms of processing, phosphorylation on Thr-315 and Ser-316 may be crucial for rapid desensitization. Phosphorylation on Thr-315 may be necessary for phosphorylation on Ser-316 to occur. In terms of tissue distribution, most abundant in lung, spleen and pineal gland. Moderate expression in brain, kidney and testis.

The protein resides in the cell membrane. Its function is as follows. Receptor for adenosine. The activity of this receptor is mediated by G proteins which inhibits adenylyl cyclase. In Ovis aries (Sheep), this protein is Adenosine receptor A3 (ADORA3).